The sequence spans 589 residues: Pyruvate kinase (589 aa).

Arginine 32 contributes to the substrate binding site. K(+) is bound by residues asparagine 34, serine 36, aspartate 66, and threonine 67. Residue 34-37 participates in ATP binding; it reads NFSH. Residues arginine 73 and lysine 157 each coordinate ATP. Glutamate 223 is a binding site for Mg(2+). Substrate is bound by residues glycine 246, aspartate 247, and threonine 279. Aspartate 247 is a binding site for Mg(2+).

The protein belongs to the pyruvate kinase family. In the C-terminal section; belongs to the PEP-utilizing enzyme family. Homotetramer. It depends on Mg(2+) as a cofactor. K(+) is required as a cofactor.

The enzyme catalyses pyruvate + ATP = phosphoenolpyruvate + ADP + H(+). It functions in the pathway carbohydrate degradation; glycolysis; pyruvate from D-glyceraldehyde 3-phosphate: step 5/5. Strongly activated by glucose-6-phosphate, ribose-5-phosphate and fructose-6-phosphate. Weak activator AMP and weak inhibitor fructose-1,6-bisphosphate can act as strong inhibitors in the presence of strong activators. The polypeptide is Pyruvate kinase (pyk) (Lactobacillus delbrueckii subsp. bulgaricus).